The chain runs to 320 residues: Protein U25 (320 aa).

Belongs to the herpesviridae US22 family.

The polypeptide is Protein U25 (U25) (Human herpesvirus 7 (strain JI) (HHV-7)).